Here is a 178-residue protein sequence, read N- to C-terminus: Peptide methionine sulfoxide reductase MsrA (178 aa).

The active site involves Cys12.

It belongs to the MsrA Met sulfoxide reductase family.

It catalyses the reaction L-methionyl-[protein] + [thioredoxin]-disulfide + H2O = L-methionyl-(S)-S-oxide-[protein] + [thioredoxin]-dithiol. The catalysed reaction is [thioredoxin]-disulfide + L-methionine + H2O = L-methionine (S)-S-oxide + [thioredoxin]-dithiol. Functionally, has an important function as a repair enzyme for proteins that have been inactivated by oxidation. Catalyzes the reversible oxidation-reduction of methionine sulfoxide in proteins to methionine. The chain is Peptide methionine sulfoxide reductase MsrA from Erwinia tasmaniensis (strain DSM 17950 / CFBP 7177 / CIP 109463 / NCPPB 4357 / Et1/99).